The chain runs to 180 residues: Large ribosomal subunit protein uL5 (180 aa).

This sequence belongs to the universal ribosomal protein uL5 family. Part of the 50S ribosomal subunit; part of the 5S rRNA/L5/L18/L25 subcomplex. Contacts the 5S rRNA and the P site tRNA. Forms a bridge to the 30S subunit in the 70S ribosome.

In terms of biological role, this is one of the proteins that bind and probably mediate the attachment of the 5S RNA into the large ribosomal subunit, where it forms part of the central protuberance. In the 70S ribosome it contacts protein S13 of the 30S subunit (bridge B1b), connecting the 2 subunits; this bridge is implicated in subunit movement. Contacts the P site tRNA; the 5S rRNA and some of its associated proteins might help stabilize positioning of ribosome-bound tRNAs. This is Large ribosomal subunit protein uL5 from Chloroflexus aurantiacus (strain ATCC 29364 / DSM 637 / Y-400-fl).